We begin with the raw amino-acid sequence, 147 residues long: Myosin-2 essential light chain (147 aa).

3 consecutive EF-hand domains span residues aspartate 7–asparagine 42, aspartate 80–lysine 115, and lysine 115–glycine 147. Serine 30 is subject to Phosphoserine. The Ca(2+) site is built by aspartate 93, aspartate 95, serine 97, tyrosine 99, and glutamate 104.

In terms of assembly, myosin is a hexamer of 2 heavy chains and 4 light chains.

In Drosophila melanogaster (Fruit fly), this protein is Myosin-2 essential light chain (Mlc-c).